The chain runs to 202 residues: Transmembrane protein 223 (202 aa).

Topologically, residues 1-43 (MAAPGRRWSVLLFRALQSLSARRALHDTAPPRDVLLFEHERGR) are mitochondrial matrix. A helical transmembrane segment spans residues 44–64 (FFAVLGLFCAGQGVFWASLAI). Residues 65–97 (ASLARPPTPVRPTDAKTPDHGGLDLRSTLWRYG) are Mitochondrial intermembrane-facing. A helical membrane pass occupies residues 98–118 (LAVGCGAIGSLVLGAGLLFSL). Topologically, residues 119–202 (RSVRSVMLRA…DNTVGAYRSL (84 aa)) are mitochondrial matrix.

This sequence belongs to the TMEM223 family. Associates with the mitochondrial ribosome.

The protein localises to the mitochondrion inner membrane. Functionally, mitochondrial ribosome-associated protein involved in the first steps of cytochrome c oxidase complex (complex IV) biogenesis. Stimulates the translation of MT-CO1 mRNA and is a constituent of early MT-CO1 assembly intermediates. This is Transmembrane protein 223 from Bos taurus (Bovine).